The following is a 549-amino-acid chain: Lipase 5 (549 aa).

The signal sequence occupies residues 1 to 15 (MKLALALSLIASVAA). Cysteines 75 and 112 form a disulfide. Ser224 functions as the Acyl-ester intermediate in the catalytic mechanism. A disulfide bridge links Cys283 with Cys292. N-linked (GlcNAc...) asparagine glycosylation occurs at Asn329. Catalysis depends on Glu356, which acts as the Charge relay system. The N-linked (GlcNAc...) asparagine glycan is linked to Asn366. The Charge relay system role is filled by His464.

This sequence belongs to the type-B carboxylesterase/lipase family.

The enzyme catalyses a triacylglycerol + H2O = a diacylglycerol + a fatty acid + H(+). The polypeptide is Lipase 5 (LIP5) (Diutina rugosa (Yeast)).